Here is a 46-residue protein sequence, read N- to C-terminus: Delta-actitoxin-Avd1d (46 aa).

Cystine bridges form between cysteine 4/cysteine 44, cysteine 6/cysteine 34, and cysteine 27/cysteine 45.

The protein belongs to the sea anemone sodium channel inhibitory toxin family. Type I subfamily.

The protein localises to the secreted. It is found in the nematocyst. Its function is as follows. Binds specifically to voltage-gated sodium channels (Nav), thereby delaying their inactivation during signal transduction. Thus it strongly stimulates mammalian cardiac muscle contraction. The polypeptide is Delta-actitoxin-Avd1d (Anemonia sulcata (Mediterranean snakelocks sea anemone)).